The primary structure comprises 456 residues: Exodeoxyribonuclease 7 large subunit (456 aa).

This sequence belongs to the XseA family. As to quaternary structure, heterooligomer composed of large and small subunits.

The protein resides in the cytoplasm. It catalyses the reaction Exonucleolytic cleavage in either 5'- to 3'- or 3'- to 5'-direction to yield nucleoside 5'-phosphates.. Functionally, bidirectionally degrades single-stranded DNA into large acid-insoluble oligonucleotides, which are then degraded further into small acid-soluble oligonucleotides. This chain is Exodeoxyribonuclease 7 large subunit, found in Escherichia coli (strain ATCC 8739 / DSM 1576 / NBRC 3972 / NCIMB 8545 / WDCM 00012 / Crooks).